The following is a 122-amino-acid chain: Large ribosomal subunit protein uL14 (122 aa).

The protein belongs to the universal ribosomal protein uL14 family. In terms of assembly, part of the 50S ribosomal subunit. Forms a cluster with proteins L3 and L19. In the 70S ribosome, L14 and L19 interact and together make contacts with the 16S rRNA in bridges B5 and B8.

Its function is as follows. Binds to 23S rRNA. Forms part of two intersubunit bridges in the 70S ribosome. The protein is Large ribosomal subunit protein uL14 of Chlamydia trachomatis serovar L2 (strain ATCC VR-902B / DSM 19102 / 434/Bu).